A 399-amino-acid chain; its full sequence is Ribonucleoside-diphosphate reductase small chain 1 (399 aa).

Residues S15, S24, and S41 each carry the phosphoserine modification. Fe cation is bound by residues D145, E176, and H179. Residue Y183 is part of the active site. Fe cation is bound by residues E239, E273, and H276.

Belongs to the ribonucleoside diphosphate reductase small chain family. As to quaternary structure, heterotetramer of two large (R1) and two small (R2) subunits. S.cerevisiae has two different R1 subunits (RNR1 and RNR3) and two different R2 subunits (RNR2 and RNR4). The functional form of the small subunits is a RNR2-RNR4 heterodimer, where RNR2 provides the iron-radical center and RNR4 is required for proper folding of RNR2 and assembly with the large subunits. Under normal growth conditions, the active form of the large subunits is a homodimer of the constitutively expressed RNR1. In damaged cells or cells arrested for DNA synthesis, the reductase consists of multiple species because of the association of the small subunits (RNR2-RNR4) with either the RNR1 homodimer or a heterodimer of RNR1 and the damage-inducible RNR3. Interacts with DIF1. Fe cation serves as cofactor.

Its subcellular location is the nucleus. It carries out the reaction a 2'-deoxyribonucleoside 5'-diphosphate + [thioredoxin]-disulfide + H2O = a ribonucleoside 5'-diphosphate + [thioredoxin]-dithiol. In terms of biological role, provides the precursors necessary for DNA synthesis. Catalyzes the biosynthesis of deoxyribonucleotides from the corresponding ribonucleotides. RNR2 provides the diiron-tyrosyl radical center. The polypeptide is Ribonucleoside-diphosphate reductase small chain 1 (RNR2) (Saccharomyces cerevisiae (strain ATCC 204508 / S288c) (Baker's yeast)).